Consider the following 399-residue polypeptide: Calsequestrin-2 (399 aa).

The signal sequence occupies residues 1-19; that stretch reads MKRTHLFIVGIYFLSSCRA. Y282 carries the phosphotyrosine modification. A glycan (N-linked (GlcNAc...) asparagine) is linked at N335. Positions 365 to 399 are disordered; the sequence is VLSGKINTEDDDEDDDDDDNSDEEDNDDSDDDDDE. The span at 373-399 shows a compositional bias: acidic residues; that stretch reads EDDDEDDDDDDNSDEEDNDDSDDDDDE. S385 and S393 each carry phosphoserine.

It belongs to the calsequestrin family. Monomer, homodimer and homooligomer. Mostly monomeric in the absence of calcium. Forms higher oligomers in a calcium-dependent manner. Dimers associate to form tetramers, that then form linear homomer chains. Interacts with ASPH and TRDN. Phosphorylation in the C-terminus, probably by CK2, moderately increases calcium buffering capacity. Post-translationally, N-glycosylated.

It is found in the sarcoplasmic reticulum lumen. Its function is as follows. Calsequestrin is a high-capacity, moderate affinity, calcium-binding protein and thus acts as an internal calcium store in muscle. Calcium ions are bound by clusters of acidic residues at the protein surface, especially at the interface between subunits. Can bind around 60 Ca(2+) ions. Regulates the release of lumenal Ca(2+) via the calcium release channel RYR2; this plays an important role in triggering muscle contraction. Plays a role in excitation-contraction coupling in the heart and in regulating the rate of heart beats. This is Calsequestrin-2 (CASQ2) from Homo sapiens (Human).